Reading from the N-terminus, the 511-residue chain is MFS-type transporper mpsC (511 aa).

Over residues 1–35 the composition is skewed to basic and acidic residues; it reads MTSSTESKHSNDESTDLEKQDAEESHGLPEERKQD. The segment at 1–65 is disordered; that stretch reads MTSSTESKHS…PDDPANPMNW (65 aa). The next 7 helical transmembrane spans lie at 74-94, 108-128, 147-167, 169-189, 201-221, 228-248, and 303-323; these read VVMASLTTLFANITSTAFAPA, ITAALTVSIYLLGFAFGPLVI, ITVAFLIGCAQAKNLGMFLVF, LITGIAGSGPGTIGGGTIADV, AFAMGPLMGPVLGPLMSGFIA, WVFRVLCIATGVMTIVLYFVM, and PITLLLSLYCAFVFGLLILLF. Asn337 is a glycosylation site (N-linked (GlcNAc...) asparagine). Transmembrane regions (helical) follow at residues 342-362, 383-403, 411-431, 443-465, and 476-496; these read GLSYLGLGFGLAIGLVLFGML, LLLMVWFAPVIPGGFFWYGWT, ILPMMGTSLIGMGALMVMMPI, VAASALAANTLLRSLAGCFLPLA, and GWGNTLLGFIAIGFTCLPILF.

It belongs to the major facilitator superfamily.

It localises to the membrane. Functionally, MFS-type transporper; part of the gene cluster that mediates the biosynthesis of macrophasetins, 3-decalinoyltetramic acids (DTAs) which feature a tetramate (pyrrolidine-2,4-dione) unit connected to a decalin fragment and that have potent bioactivities. Efflux pump that might be required for efficient secretion of macrophasetins. This is MFS-type transporper mpsC from Macrophomina phaseolina (strain MS6) (Charcoal rot fungus).